A 282-amino-acid polypeptide reads, in one-letter code: Putative dolichyldiphosphatase (282 aa).

A run of 2 helical transmembrane segments spans residues 26–46 and 93–113; these read LLCA…ATLI and MPSS…LFLL. The tract at residues 121–153 is disordered; it reads QQQQQQQKQKQRERKKQVTNVKTTTTNGSGNGS. The span at 138–148 shows a compositional bias: low complexity; that stretch reads VTNVKTTTTNG. A run of 2 helical transmembrane segments spans residues 173 to 193 and 207 to 227; these read WSFA…GAVA and VLVG…VTHV.

The protein belongs to the dolichyldiphosphatase family.

It is found in the endoplasmic reticulum membrane. The enzyme catalyses a di-trans,poly-cis-dolichyl diphosphate + H2O = a di-trans,poly-cis-dolichyl phosphate + phosphate + H(+). The protein operates within protein modification; protein glycosylation. The protein is Putative dolichyldiphosphatase of Neurospora crassa (strain ATCC 24698 / 74-OR23-1A / CBS 708.71 / DSM 1257 / FGSC 987).